Reading from the N-terminus, the 349-residue chain is Spermidine/putrescine import ATP-binding protein PotA (349 aa).

One can recognise an ABC transporter domain in the interval 7-237 (IELKGITKSY…PANSFVAKFI (231 aa)). An ATP-binding site is contributed by 39-46 (GPSGCGKT).

Belongs to the ABC transporter superfamily. Spermidine/putrescine importer (TC 3.A.1.11.1) family. As to quaternary structure, the complex is composed of two ATP-binding proteins (PotA), two transmembrane proteins (PotB and PotC) and a solute-binding protein (PotD).

The protein resides in the cell membrane. The enzyme catalyses ATP + H2O + polyamine-[polyamine-binding protein]Side 1 = ADP + phosphate + polyamineSide 2 + [polyamine-binding protein]Side 1.. Part of the ABC transporter complex PotABCD involved in spermidine/putrescine import. Responsible for energy coupling to the transport system. The chain is Spermidine/putrescine import ATP-binding protein PotA from Clostridium perfringens (strain SM101 / Type A).